The primary structure comprises 303 residues: MRLVLFLNMGGAMNLQDCEVFLKNMFNDPYILGIKNRFLRKFVAWIITKARVKAMQENYKKMGGKSPLNELTQSLCDKLNLKQDEFKFDFVNLYVPPFATEILQKYTLNENDEIILFPLYPHHSCTTVTSSLEILQDEISKQKIQAKVKTIDIFYKNKLYNEMIVSHILAKKNKFDAKILIFSAHSLPQSIIDKGDLYEKHVKDHVEILKEKLKDHFDEFILAYQSKLGPVKWLEPNTSDVLANLNDKALIYPISFCIDCSETIFELGMEYKHLAKCDYDLISCPNDSDEFAQFILKYLSDLN.

Histidine 185 and glutamate 262 together coordinate Fe cation.

Belongs to the ferrochelatase family.

It localises to the cytoplasm. It carries out the reaction heme b + 2 H(+) = protoporphyrin IX + Fe(2+). The protein operates within porphyrin-containing compound metabolism; protoheme biosynthesis; protoheme from protoporphyrin-IX: step 1/1. Its function is as follows. Catalyzes the ferrous insertion into protoporphyrin IX. This Campylobacter jejuni subsp. doylei (strain ATCC BAA-1458 / RM4099 / 269.97) protein is Ferrochelatase.